The chain runs to 44 residues: Conotoxin Rg11a (44 aa).

4 cysteine pairs are disulfide-bonded: Cys1–Cys15, Cys8–Cys22, Cys14–Cys30, and Cys21–Cys36.

Expressed by the venom duct.

It localises to the secreted. Neurotoxin. Elicits hypersensibility when injected intracranially in mice. May act via potassium channel currents. The polypeptide is Conotoxin Rg11a (Conus regius (Crown cone)).